Reading from the N-terminus, the 527-residue chain is CTP synthase (527 aa).

Residues 1-270 are amidoligase domain; sequence MKYIFVTGGV…ADVLCQLLQL (270 aa). Serine 12 is a binding site for CTP. Residue serine 12 coordinates UTP. Residues 13 to 18 and aspartate 70 contribute to the ATP site; that span reads GLGKGI. Positions 70 and 145 each coordinate Mg(2+). CTP contacts are provided by residues 152–154, 191–196, and lysine 227; these read DIE and KTKPTQ. Residues 191 to 196 and lysine 227 each bind UTP; that span reads KTKPTQ. One can recognise a Glutamine amidotransferase type-1 domain in the interval 292–525; it reads TIGIVSKYGK…VEACLKNRGK (234 aa). Glycine 349 serves as a coordination point for L-glutamine. Catalysis depends on cysteine 376, which acts as the Nucleophile; for glutamine hydrolysis. L-glutamine contacts are provided by residues 377–380, glutamate 400, and arginine 455; that span reads LGFQ. Residues histidine 498 and glutamate 500 contribute to the active site.

This sequence belongs to the CTP synthase family. In terms of assembly, homotetramer.

It catalyses the reaction UTP + L-glutamine + ATP + H2O = CTP + L-glutamate + ADP + phosphate + 2 H(+). The catalysed reaction is L-glutamine + H2O = L-glutamate + NH4(+). The enzyme catalyses UTP + NH4(+) + ATP = CTP + ADP + phosphate + 2 H(+). The protein operates within pyrimidine metabolism; CTP biosynthesis via de novo pathway; CTP from UDP: step 2/2. With respect to regulation, allosterically activated by GTP, when glutamine is the substrate; GTP has no effect on the reaction when ammonia is the substrate. The allosteric effector GTP functions by stabilizing the protein conformation that binds the tetrahedral intermediate(s) formed during glutamine hydrolysis. Inhibited by the product CTP, via allosteric rather than competitive inhibition. Its function is as follows. Catalyzes the ATP-dependent amination of UTP to CTP with either L-glutamine or ammonia as the source of nitrogen. Regulates intracellular CTP levels through interactions with the four ribonucleotide triphosphates. This is CTP synthase from Methanospirillum hungatei JF-1 (strain ATCC 27890 / DSM 864 / NBRC 100397 / JF-1).